We begin with the raw amino-acid sequence, 274 residues long: 3-methyl-2-oxobutanoate hydroxymethyltransferase (274 aa).

The Mg(2+) site is built by Asp49 and Asp88. Residues 49-50 (DS), Asp88, and Lys118 each bind 3-methyl-2-oxobutanoate. Glu120 lines the Mg(2+) pocket. Glu187 acts as the Proton acceptor in catalysis.

Belongs to the PanB family. Homodecamer; pentamer of dimers. Mg(2+) serves as cofactor.

It is found in the cytoplasm. The enzyme catalyses 3-methyl-2-oxobutanoate + (6R)-5,10-methylene-5,6,7,8-tetrahydrofolate + H2O = 2-dehydropantoate + (6S)-5,6,7,8-tetrahydrofolate. The protein operates within cofactor biosynthesis; (R)-pantothenate biosynthesis; (R)-pantoate from 3-methyl-2-oxobutanoate: step 1/2. Functionally, catalyzes the reversible reaction in which hydroxymethyl group from 5,10-methylenetetrahydrofolate is transferred onto alpha-ketoisovalerate to form ketopantoate. In Rhodopseudomonas palustris (strain TIE-1), this protein is 3-methyl-2-oxobutanoate hydroxymethyltransferase.